We begin with the raw amino-acid sequence, 135 residues long: Poly [ADP-ribose] polymerase 1 (135 aa).

A PARP alpha-helical domain is found at 1–21; the sequence is QAKVEMLDNLLDIEVAYSLLK. In terms of domain architecture, PARP catalytic spans 30 to 135; that stretch reads DPIDINYEKL…APVTGYMFGK (106 aa). Residues 104–106, Gly-113, and Arg-120 contribute to the NAD(+) site; that span reads HGS. Lys-135 is an active-site residue.

It belongs to the ARTD/PARP family. As to quaternary structure, homodimer; PARP-type zinc-fingers from separate parp1 molecules form a dimer module that specifically recognizes DNA strand breaks. Poly-ADP-ribosylated on serine, glutamate and aspartate residues by autocatalysis. Auto-ADP-ribosylation on serine takes place following interaction with HPF1. Auto poly-ADP-ribosylation on serine residues promotes its dissociation from chromatin.

It localises to the chromosome. The protein resides in the nucleus. It is found in the nucleolus. Its subcellular location is the cytoplasm. The protein localises to the cytosol. The enzyme catalyses NAD(+) + (ADP-D-ribosyl)n-acceptor = nicotinamide + (ADP-D-ribosyl)n+1-acceptor + H(+).. The catalysed reaction is L-seryl-[protein] + NAD(+) = O-(ADP-D-ribosyl)-L-seryl-[protein] + nicotinamide + H(+). It carries out the reaction L-aspartyl-[protein] + NAD(+) = 4-O-(ADP-D-ribosyl)-L-aspartyl-[protein] + nicotinamide. It catalyses the reaction L-glutamyl-[protein] + NAD(+) = 5-O-(ADP-D-ribosyl)-L-glutamyl-[protein] + nicotinamide. The enzyme catalyses L-tyrosyl-[protein] + NAD(+) = O-(ADP-D-ribosyl)-L-tyrosyl-[protein] + nicotinamide + H(+). The catalysed reaction is L-histidyl-[protein] + NAD(+) = N(tele)-(ADP-D-ribosyl)-L-histidyl-[protein] + nicotinamide + H(+). ADP-ribosyltransferase activity is regulated via an allosteric activation mechanism. In absence of activation signal, parp1 is autoinhibited by the PARP alpha-helical domain (also named HD region), which prevents effective NAD(+)-binding. Activity is highly stimulated by signals, such as DNA strand breaks. Binding to damaged DNA unfolds the PARP alpha-helical domain, relieving autoinhibition. Poly-ADP-ribosyltransferase activity is tightly regulated and parp1 is removed from damaged chromatin following initial poly-ADP-ribosylation of chromatin to avoid prolonged residence (trapping) that has cytotoxic consequences. A number of factors or post-translational modifications (auto-poly-ADP-ribosylation) promote parp1 removal from chromatin. In terms of biological role, poly-ADP-ribosyltransferase that mediates poly-ADP-ribosylation of proteins and plays a key role in DNA repair. Mediates glutamate, aspartate, serine, histidine or tyrosine ADP-ribosylation of proteins: the ADP-D-ribosyl group of NAD(+) is transferred to the acceptor carboxyl group of target residues and further ADP-ribosyl groups are transferred to the 2'-position of the terminal adenosine moiety, building up a polymer with an average chain length of 20-30 units. Serine ADP-ribosylation of proteins constitutes the primary form of ADP-ribosylation of proteins in response to DNA damage. Specificity for the different amino acids is conferred by interacting factors, such as hpf1 and nmnat1. Following interaction with hpf1, catalyzes serine ADP-ribosylation of target proteins; hpf1 confers serine specificity by completing the parp1 active site. Also catalyzes tyrosine ADP-ribosylation of target proteins following interaction with hpf1. Following interaction with nmnat1, catalyzes glutamate and aspartate ADP-ribosylation of target proteins; nmnat1 confers glutamate and aspartate specificity. Parp1 initiates the repair of DNA breaks: recognizes and binds DNA breaks within chromatin and recruits hpf1, licensing serine ADP-ribosylation of target proteins, such as histones (H2BS6ADPr and H3S10ADPr), thereby promoting decompaction of chromatin and the recruitment of repair factors leading to the reparation of DNA strand breaks. In addition to base excision repair (BER) pathway, also involved in double-strand breaks (DSBs) repair. Mediates the poly-ADP-ribosylation of a number of proteins. In addition to proteins, also able to ADP-ribosylate DNA: catalyzes ADP-ribosylation of DNA strand break termini containing terminal phosphates and a 2'-OH group in single- and double-stranded DNA, respectively. Parp1-mediated DNA repair in neurons plays a role in sleep: senses DNA damage in neurons and promotes sleep, facilitating efficient DNA repair. In addition to DNA repair, also involved in other processes, such as transcription regulation, programmed cell death, membrane repair, adipogenesis and innate immunity. Acts as a repressor of transcription: binds to nucleosomes and modulates chromatin structure in a manner similar to histone H1, thereby altering RNA polymerase II. Acts both as a positive and negative regulator of transcription elongation, depending on the context. Poly-ADP-ribose chains generated by parp1 also play a role in poly-ADP-ribose-dependent cell death, a process named parthanatos. Also acts as a negative regulator of the cGAS-STING pathway by mediating poly-ADP-ribosylation and inactivation of cgas. Acts as a negative regulator of adipogenesis by catalyzing poly ADP-ribosylation of histone H2B on 'Glu-35' (H2BE35ADPr). The sequence is that of Poly [ADP-ribose] polymerase 1 (parp1) from Oncorhynchus masou (Cherry salmon).